The chain runs to 301 residues: Sulfate adenylyltransferase subunit 2 (301 aa).

The tract at residues 279-301 (RQGRLIDRDEAGSMEKKKREGYF) is disordered.

Belongs to the PAPS reductase family. CysD subfamily. As to quaternary structure, heterodimer composed of CysD, the smaller subunit, and CysN.

It catalyses the reaction sulfate + ATP + H(+) = adenosine 5'-phosphosulfate + diphosphate. It participates in sulfur metabolism; hydrogen sulfide biosynthesis; sulfite from sulfate: step 1/3. Functionally, with CysN forms the ATP sulfurylase (ATPS) that catalyzes the adenylation of sulfate producing adenosine 5'-phosphosulfate (APS) and diphosphate, the first enzymatic step in sulfur assimilation pathway. APS synthesis involves the formation of a high-energy phosphoric-sulfuric acid anhydride bond driven by GTP hydrolysis by CysN coupled to ATP hydrolysis by CysD. In Mesorhizobium japonicum (strain LMG 29417 / CECT 9101 / MAFF 303099) (Mesorhizobium loti (strain MAFF 303099)), this protein is Sulfate adenylyltransferase subunit 2.